The chain runs to 353 residues: Melatonin receptor type 1A (353 aa).

At 1–32 (MKGNVSELLNATQQAPGGGEGGRPRPSWLAST) the chain is on the extracellular side. Asn-4 and Asn-10 each carry an N-linked (GlcNAc...) asparagine glycan. A helical membrane pass occupies residues 33–53 (LAFILIFTIVVDILGNLLVIL). Residues 54-66 (SVYRNKKLRNSGN) lie on the Cytoplasmic side of the membrane. Residues 67-87 (IFVVSLAVADLVVAVYPYPLV) traverse the membrane as a helical segment. Over 88-105 (LTSILNNGWNLGYLHCQV) the chain is Extracellular. A disulfide bond links Cys-103 and Cys-180. Residues 106 to 126 (SAFLMGLSVIGSIFNITGIAM) traverse the membrane as a helical segment. Over 127–145 (NRYCYICHSLKYDKIYSNK) the chain is Cytoplasmic. Residues 146–166 (NSLCYVFLIWMLTLIAIMPNL) form a helical membrane-spanning segment. Residues 167-190 (QTGTLQYDPRIYSCTFTQSVSSAY) lie on the Extracellular side of the membrane. A helical membrane pass occupies residues 191-211 (TIAVVVFHFIVPMIIVIFCYL). Topologically, residues 212 to 243 (RIWVLVLQVRRRVKPDNKPKLKPQDFRNFVTM) are cytoplasmic. A helical transmembrane segment spans residues 244 to 264 (FVVFVLFAICWAPLNLIGLIV). The Extracellular portion of the chain corresponds to 265 to 277 (ASDPATMVPRIPE). A helical transmembrane segment spans residues 278-298 (WLFVASYYLAYFNSCLNAIIY). Topologically, residues 299–353 (GLLNQNFRKEYKKIIVSLCTAKMFFVESSNEEADKIKCKPSPLIPNNNLIKVDSV) are cytoplasmic.

It belongs to the G-protein coupled receptor 1 family.

It localises to the cell membrane. Functionally, high affinity receptor for melatonin. Likely to mediate the reproductive and circadian actions of melatonin. The activity of this receptor is mediated by pertussis toxin sensitive G proteins that inhibit adenylate cyclase activity. Possibly involved in sleep induction, by melatonin activation of the potassium channel KCNMA1/BK and the dissociation of G-beta and G-gamma subunits, thereby decreasing synaptic transmission. This is Melatonin receptor type 1A (Mtnr1a) from Mus musculus (Mouse).